Consider the following 453-residue polypeptide: Armadillo repeat-containing X-linked protein 1 (453 aa).

Residues 1 to 6 (MGRTRE) are Mitochondrial intermembrane-facing. Mitochondrion outer membrane (MOM)-targeting sequence stretches follow at residues 1–6 (MGRTRE) and 26–36 (RLAWGRDENEK). Residues 7 to 29 (AGCVAAGVVIGAGACYCVYRLAW) traverse the membrane as a helical; Signal-anchor segment. Residues 30-453 (GRDENEKIWD…VKVLKVLTKL (424 aa)) are Cytoplasmic-facing. The tract at residues 140–182 (PSLPCPGGRGGGCHPTRSGSRAGGRASGKSKGKARSKSTRAPA) is disordered. The span at 167–177 (GKSKGKARSKS) shows a compositional bias: basic residues. ARM repeat units lie at residues 195 to 235 (PYKI…NNAA), 237 to 276 (SFNQ…NLSV), 358 to 398 (PAMT…NIND), and 415 to 453 (SSLF…LTKL).

Belongs to the eutherian X-chromosome-specific Armcx family. In terms of assembly, interacts with MIRO1.

The protein localises to the mitochondrion. It localises to the mitochondrion outer membrane. Regulates mitochondrial transport during axon regeneration. Increases the proportion of motile mitochondria by recruiting stationary mitochondria into the motile pool. Enhances mitochondria movement and neurite growth in both adult axons and embryonic neurons. Promotes neuronal survival and axon regeneration after nerve injury. May link mitochondria to the Trak1-kinesin motor complex via its interaction with MIRO1. The polypeptide is Armadillo repeat-containing X-linked protein 1 (ARMCX1) (Pongo abelii (Sumatran orangutan)).